A 78-amino-acid chain; its full sequence is Calcium/calmodulin-dependent protein kinase II inhibitor 1 (78 aa).

Positions 41–68 are CAMK2 inhibitory domain; sequence NKRPPKLGQIGRSKRVVIEDDRIDDVLK.

It belongs to the CAMK2N family. In terms of assembly, interacts with CAMK2B; the presence of Ca(2+)/calmodulin increases the interaction but is not essential. Interacts with CAMK2A; this interaction requires CAMK2A activation by Ca(2+).

The protein resides in the synapse. It is found in the cell projection. The protein localises to the dendrite. It localises to the postsynaptic density. Functionally, potent and specific inhibitor of CaM-kinase II (CAMK2). Plays a role in the maintenance of long-term retrieval-induced memory in response to contextual fear. Modulates blood pressure and vascular reactivity via regulation of CAMK2 activity in addition to regulation of left ventricular mass. Mediates the NLRP3 inflammasome in cardiomyocytes via acting as an inhibitor of the MAPK14/p38 and MAPK8/JNK pathways, thereby regulating ventricular remodeling and cardiac rhythm post-myocardial infarction. Negatively effects insulin sensitivity and promotes lipid formation in adipose tissues independent of CAMK2 signaling. This is Calcium/calmodulin-dependent protein kinase II inhibitor 1 (CAMK2N1) from Bos taurus (Bovine).